Consider the following 549-residue polypeptide: Chaperonin GroEL (549 aa).

Residues 30-33 (TLGP), lysine 51, 87-91 (DGTTT), glycine 415, 479-481 (NAA), and aspartate 495 contribute to the ATP site.

Belongs to the chaperonin (HSP60) family. Forms a cylinder of 14 subunits composed of two heptameric rings stacked back-to-back. Interacts with the co-chaperonin GroES.

It is found in the cytoplasm. The catalysed reaction is ATP + H2O + a folded polypeptide = ADP + phosphate + an unfolded polypeptide.. Its function is as follows. Together with its co-chaperonin GroES, plays an essential role in assisting protein folding. The GroEL-GroES system forms a nano-cage that allows encapsulation of the non-native substrate proteins and provides a physical environment optimized to promote and accelerate protein folding. The sequence is that of Chaperonin GroEL from Leptothrix cholodnii (strain ATCC 51168 / LMG 8142 / SP-6) (Leptothrix discophora (strain SP-6)).